Consider the following 151-residue polypeptide: Decarboxylase nsrE (151 aa).

Positions 31-126 constitute an EthD domain; sequence AGMTEEDYHN…VGDHENFADT (96 aa).

The protein belongs to the tpcK family.

It carries out the reaction atrochrysone carboxylate + H(+) = atrochrysone + CO2. Its pathway is secondary metabolite biosynthesis. Functionally, decarboxylase; part of the gene cluster that mediates the biosynthesis of the tetrahydroxanthone dimer neosartorin, which exhibits antibacterial activity. The two different monomeric units appear to be synthesized by the same set of enzymes, among which the Baeyer-Villiger monooxygenase nsrF is the key enzyme for the divergence of the biosynthetic routes. The pathway begins with the synthesis of atrochrysone thioester by the polyketide synthase nsrB. The atrochrysone carboxyl ACP thioesterase nsrC then breaks the thioester bond and releases the atrochrysone carboxylic acid from AacuL. Atrochrysone carboxylic acid is decarboxylated by the decarboxylase nsrE, and oxidized by the anthrone oxygenase nsrD to yield emodin. Emodin is then reduced to emodin hydroquinone by the oxidoreductase nsrR. A-ring reduction by the short chain dehydrogenase nsrJ, dehydration by the scytalone dehydratase-like protein nsrI and probable spontaneous re-oxidation, results in overall deoxygenation to chrysophanol. The Baeyer-Villiger monooxygenase nsrF accepts chrysophanol as a substrate to insert one oxygen atom at two different positions to yield the precursors of both monomric units. NsrF is promiscuous/flexible in interacting with the 2 (non methylated and methylated) aromatic rings of chrysophanol, thus diverging the biosynthetic pathway at this point. After the hydrolysis of the lactones, methylesterification by the methyltransferase nsrG yields respectively moniliphenone and 2,2',6'-trihydroxy-4-methyl-6-methoxya-cyldiphenylmethanone. The next steps are the hydroxylation by the FAD-dependent monooxygenase nsrK, followed by isomerization by the monooxygenase nsrQ. The short chain dehydrogenase/reductase nsrO then catalyzes the C-5 ketoreduction to give the xanthone skeleton of blennolide C and 5-acetylblennolide A. The acetyltransferase nsrL has a strict substrate specificity and uses only blennolide A but not blennolide C to yield 5-acetylblennolide A as the single-acetylated product. In the final step of the biosynthesis, the heterodimerization of the 2 xanthones, blennolide C and 5-acetylblennolide A, is catalyzed by the cytochrome P450 monooxygenase nsrP. NsrP can utilize at least three different xanthones as its substrates to perform the dimerization reaction. The protein is Decarboxylase nsrE of Aspergillus novofumigatus (strain IBT 16806).